The primary structure comprises 486 residues: Serine/threonine-protein phosphatase 2A 56 kDa regulatory subunit alpha isoform (486 aa).

Over residues 1–18 (MSSSSPPAGAASAAISAS) the composition is skewed to low complexity. Residues 1–52 (MSSSSPPAGAASAAISASEKVDGFTRKSVRKAQRQKRSQGSSQFRSQGSQAE) are disordered. Position 2 is an N-acetylserine (Ser-2). Residues 27–37 (KSVRKAQRQKR) show a composition bias toward basic residues. The segment covering 38–51 (SQGSSQFRSQGSQA) has biased composition (low complexity). Ser-41, Ser-42, and Ser-49 each carry phosphoserine.

This sequence belongs to the phosphatase 2A regulatory subunit B56 family. PP2A consists of a common heterodimeric core enzyme, composed of a 36 kDa catalytic subunit (subunit C) and a 65 kDa constant regulatory subunit (PR65 or subunit A), that associates with a variety of regulatory subunits. Proteins that associate with the core dimer include three families of regulatory subunits B (the R2/B/PR55/B55, R3/B''/PR72/PR130/PR59 and R5/B'/B56 families), the 48 kDa variable regulatory subunit, viral proteins, and cell signaling molecules. Interacts with SGO1. In terms of processing, phosphorylated on serine residues. Widely expressed with the highest expression in heart and skeletal muscle.

Its subcellular location is the cytoplasm. It is found in the nucleus. The protein localises to the chromosome. The protein resides in the centromere. In terms of biological role, the B regulatory subunit might modulate substrate selectivity and catalytic activity, and might also direct the localization of the catalytic enzyme to a particular subcellular compartment. The chain is Serine/threonine-protein phosphatase 2A 56 kDa regulatory subunit alpha isoform (PPP2R5A) from Homo sapiens (Human).